Here is a 183-residue protein sequence, read N- to C-terminus: Large ribosomal subunit protein uL13m (183 aa).

This sequence belongs to the universal ribosomal protein uL13 family. Component of the mitochondrial large ribosomal subunit (mt-LSU). Mature N.crassa 74S mitochondrial ribosomes consist of a small (37S) and a large (54S) subunit. The 37S small subunit contains a 16S ribosomal RNA (16S mt-rRNA) and 32 different proteins. The 54S large subunit contains a 23S rRNA (23S mt-rRNA) and 42 different proteins.

It is found in the mitochondrion. Component of the mitochondrial ribosome (mitoribosome), a dedicated translation machinery responsible for the synthesis of mitochondrial genome-encoded proteins, including at least some of the essential transmembrane subunits of the mitochondrial respiratory chain. The mitoribosomes are attached to the mitochondrial inner membrane and translation products are cotranslationally integrated into the membrane. The protein is Large ribosomal subunit protein uL13m (mrpl23) of Neurospora crassa (strain ATCC 24698 / 74-OR23-1A / CBS 708.71 / DSM 1257 / FGSC 987).